The primary structure comprises 429 residues: MSAILDIHARQIFDSRGNPTVEVDVYTENGIMGRAAVPSGASTGEHEAVELRDGGKDFMGKGVQKAVDNVNGEIADHLLGFSVFEQNLIDQTMIDLDGTPNKSKLGANAILGVSLAVAKAAANELNMPLYRYVGGVSANTLPVPMMNIINGGSHSDAPIAFQEFMIMPVMADSFSHALKMGTEIFHNLKNVLHDRGLSTAVGDEGGFAPTLDGTEDALDTILKAIEKAGYKPGKEVMIALDCAAAEFFVDGKYDYTKFEGDKGKVRTSEEQADYLAELASKYPIISIEDGMDENDWEGWKAVTDKIGDKVQLVGDDLFVTNVERLGRGIKESIANSILIKVNQIGTLTETIAAVNMAHNAGYTSVMSHRSGETEDNTIADLAVALNTGQIKTGSASRSDRMAKYNQLLRIEEELGDVAFYPQDKAFKIK.

Residue Gln-162 coordinates (2R)-2-phosphoglycerate. Catalysis depends on Glu-204, which acts as the Proton donor. The Mg(2+) site is built by Asp-241, Glu-288, and Asp-315. Positions 340, 369, 370, and 391 each coordinate (2R)-2-phosphoglycerate. Lys-340 serves as the catalytic Proton acceptor.

This sequence belongs to the enolase family. Mg(2+) serves as cofactor.

The protein localises to the cytoplasm. It localises to the secreted. Its subcellular location is the cell surface. The enzyme catalyses (2R)-2-phosphoglycerate = phosphoenolpyruvate + H2O. Its pathway is carbohydrate degradation; glycolysis; pyruvate from D-glyceraldehyde 3-phosphate: step 4/5. Functionally, catalyzes the reversible conversion of 2-phosphoglycerate (2-PG) into phosphoenolpyruvate (PEP). It is essential for the degradation of carbohydrates via glycolysis. This Christiangramia forsetii (strain DSM 17595 / CGMCC 1.15422 / KT0803) (Gramella forsetii) protein is Enolase.